Consider the following 145-residue polypeptide: MDIHEILNYLPHRYPFVLVDRVLSLELNKEIVAVKNVTINEPFFPGHFPYHPVMPGVLIVEALAQAAAILSFKTMGTKPNDKSVYYFAGMDNVRFKKPVSPGDQLILKVSIDRILRGIWRYKGEALVDGAVVAEAEMMCILKAID.

Residue histidine 47 is part of the active site.

Belongs to the thioester dehydratase family. FabZ subfamily.

The protein localises to the cytoplasm. It carries out the reaction a (3R)-hydroxyacyl-[ACP] = a (2E)-enoyl-[ACP] + H2O. Involved in unsaturated fatty acids biosynthesis. Catalyzes the dehydration of short chain beta-hydroxyacyl-ACPs and long chain saturated and unsaturated beta-hydroxyacyl-ACPs. In Methylobacillus flagellatus (strain ATCC 51484 / DSM 6875 / VKM B-1610 / KT), this protein is 3-hydroxyacyl-[acyl-carrier-protein] dehydratase FabZ.